A 93-amino-acid chain; its full sequence is Small integral membrane protein 41 (93 aa).

The chain crosses the membrane as a helical span at residues 38-58 (VVLGVLSLLVLCGVLFLGGGL). Basic and acidic residues predominate over residues 71–80 (REQRASREPE). The tract at residues 71 to 93 (REQRASREPEPGSASGEDGDDDS) is disordered.

The protein localises to the membrane. In Homo sapiens (Human), this protein is Small integral membrane protein 41.